The chain runs to 382 residues: Adaptive-response sensory kinase SasA (382 aa).

Residues 160 to 382 form the Histidine kinase domain; the sequence is MLAHDLRSPL…CFHFTLPVYR (223 aa). At histidine 163 the chain carries Phosphohistidine; by autocatalysis.

In terms of assembly, homooligomerizes. Interacts with KaiC. Participates in the KaiABC clock complex, whose core is composed of a KaiC homohexamer, 6 KaiB and up to 6 KaiA dimers. SasA and KaiB(fs) compete to bind to KaiC.

The enzyme catalyses ATP + protein L-histidine = ADP + protein N-phospho-L-histidine.. In terms of biological role, member of the two-component regulatory system SasA/RpaA involved in genome-wide circadian gene expression. One of several clock output pathways. Participates in the Kai clock protein complex, the main circadian regulator in cyanobacteria, via its interaction with KaiC. KaiC enhances the autophosphorylation activity of SasA, which then transfers its phosphate group to RpaA to activate it. In addition to its output function, recruits fold-shifted KaiB (KaiB(fs)) to KaiC to cooperatively form the KaiB(6):KaiC(6) complex (independent of SasA kinase activity). Required for robustness of the circadian rhythm of gene expression and is involved in clock output, also required for adaptation to light/dark cycles. The polypeptide is Adaptive-response sensory kinase SasA (Crocosphaera subtropica (strain ATCC 51142 / BH68) (Cyanothece sp. (strain ATCC 51142))).